The primary structure comprises 865 residues: Catenin alpha-2 (865 aa).

Over residues 823-839 (PEKKPLVKREKPEECQT) the composition is skewed to basic and acidic residues. The disordered stretch occupies residues 823–851 (PEKKPLVKREKPEECQTRVRRGSQKKHIS). A compositionally biased stretch (basic residues) spans 840 to 850 (RVRRGSQKKHI).

This sequence belongs to the vinculin/alpha-catenin family.

The protein localises to the cell membrane. It is found in the cytoplasm. The protein resides in the cytoskeleton. Its subcellular location is the cell junction. It localises to the adherens junction. The protein localises to the cell projection. It is found in the axon. The protein resides in the nucleus. In terms of biological role, may function as a linker between cadherin adhesion receptors and the cytoskeleton to regulate cell-cell adhesion and differentiation in the nervous system. In Danio rerio (Zebrafish), this protein is Catenin alpha-2 (Ctnna2).